We begin with the raw amino-acid sequence, 266 residues long: Proteasome subunit beta type-7 (266 aa).

Positions 1-34 (MENLNRGGFDFDLCNRNNVLEKTGLRMKGFMKTG) are cleaved as a propeptide — removed in mature form. Threonine 35 (nucleophile) is an active-site residue.

It belongs to the peptidase T1B family. The 26S proteasome consists of a 20S proteasome core and two 19S regulatory subunits. The 20S proteasome core is composed of 28 subunits that are arranged in four stacked rings, resulting in a barrel-shaped structure. The two end rings are each formed by seven alpha subunits, and the two central rings are each formed by seven beta subunits. The catalytic chamber with the active sites is on the inside of the barrel.

Its subcellular location is the cytoplasm. It localises to the nucleus. It carries out the reaction Cleavage of peptide bonds with very broad specificity.. Its function is as follows. The proteasome is a multicatalytic proteinase complex which is characterized by its ability to cleave peptides with Arg, Phe, Tyr, Leu, and Glu adjacent to the leaving group at neutral or slightly basic pH. The proteasome has an ATP-dependent proteolytic activity. The polypeptide is Proteasome subunit beta type-7 (psmB7) (Dictyostelium discoideum (Social amoeba)).